The sequence spans 308 residues: Glutaminase (308 aa).

7 residues coordinate substrate: Ser66, Asn117, Glu161, Asn168, Tyr192, Tyr244, and Val262.

It belongs to the glutaminase family. In terms of assembly, homotetramer.

The catalysed reaction is L-glutamine + H2O = L-glutamate + NH4(+). In Salmonella choleraesuis (strain SC-B67), this protein is Glutaminase.